Reading from the N-terminus, the 618-residue chain is Beta-xylosidase (618 aa).

Disordered regions lie at residues Glu76–Ser100 and Leu463–Gln509.

This sequence belongs to the glycosyl hydrolase 52 family.

It localises to the secreted. The catalysed reaction is Hydrolysis of (1-&gt;4)-beta-D-xylans, to remove successive D-xylose residues from the non-reducing termini.. Its pathway is glycan degradation; xylan degradation. In Geobacillus stearothermophilus (Bacillus stearothermophilus), this protein is Beta-xylosidase (xylA).